The following is a 744-amino-acid chain: Integrator complex subunit 11 homolog (744 aa).

Zn(2+) is bound by residues H67, H69, D71, H72, H156, and D177. The short motif at 67 to 72 (HFHLDH) is the HXHXDH motif element. E202 is an active-site residue. Zn(2+) is bound at residue H425. Positions 626-669 (NNNTSDDNNNNNNNNNNNNNNNNNNNNNNNNNNNNNNNNNNNNN) are disordered.

It belongs to the metallo-beta-lactamase superfamily. RNA-metabolizing metallo-beta-lactamase-like family. INTS11 subfamily. In terms of assembly, component of the Integrator complex. The core complex associates with protein phosphatase 2A subunits, to form the Integrator-PP2A (INTAC) complex. Zn(2+) is required as a cofactor.

It is found in the nucleus. It localises to the cytoplasm. Functionally, RNA endonuclease component of the integrator complex, a multiprotein complex that terminates RNA polymerase II (Pol II) transcription in the promoter-proximal region of genes. The integrator complex provides a quality checkpoint during transcription elongation by driving premature transcription termination of transcripts that are unfavorably configured for transcriptional elongation: the complex terminates transcription by (1) catalyzing dephosphorylation of the C-terminal domain (CTD) of Pol II subunit polr2a, (2) degrading the exiting nascent RNA transcript via endonuclease activity and (3) promoting the release of Pol II from bound DNA. The integrator complex is also involved in terminating the synthesis of non-coding Pol II transcripts, such as enhancer RNAs (eRNAs), small nuclear RNAs (snRNAs), telomerase RNAs and long non-coding RNAs (lncRNAs). Within the integrator complex, INTS11 constitutes the RNA endonuclease subunit that degrades exiting nascent RNA transcripts. The protein is Integrator complex subunit 11 homolog (ints11) of Dictyostelium discoideum (Social amoeba).